The primary structure comprises 402 residues: Acetate kinase (402 aa).

Residue N7 participates in Mg(2+) binding. K14 lines the ATP pocket. R95 contacts substrate. The Proton donor/acceptor role is filled by D152. ATP is bound by residues 212 to 216, 286 to 288, and 334 to 338; these read HLGNG, DMR, and GIGEN. E388 contributes to the Mg(2+) binding site.

Belongs to the acetokinase family. Homodimer. It depends on Mg(2+) as a cofactor. The cofactor is Mn(2+).

Its subcellular location is the cytoplasm. It catalyses the reaction acetate + ATP = acetyl phosphate + ADP. It participates in metabolic intermediate biosynthesis; acetyl-CoA biosynthesis; acetyl-CoA from acetate: step 1/2. Catalyzes the formation of acetyl phosphate from acetate and ATP. Can also catalyze the reverse reaction. This Nitratidesulfovibrio vulgaris (strain DP4) (Desulfovibrio vulgaris) protein is Acetate kinase.